The sequence spans 398 residues: Tryptophan synthase beta chain (398 aa).

Position 88 is an N6-(pyridoxal phosphate)lysine (K88).

The protein belongs to the TrpB family. Tetramer of two alpha and two beta chains. Pyridoxal 5'-phosphate is required as a cofactor.

The catalysed reaction is (1S,2R)-1-C-(indol-3-yl)glycerol 3-phosphate + L-serine = D-glyceraldehyde 3-phosphate + L-tryptophan + H2O. Its pathway is amino-acid biosynthesis; L-tryptophan biosynthesis; L-tryptophan from chorismate: step 5/5. Functionally, the beta subunit is responsible for the synthesis of L-tryptophan from indole and L-serine. This is Tryptophan synthase beta chain from Mannheimia succiniciproducens (strain KCTC 0769BP / MBEL55E).